The chain runs to 1080 residues: DNA polymerase II large subunit (1080 aa).

This sequence belongs to the archaeal DNA polymerase II family. Heterodimer of a large subunit and a small subunit.

The catalysed reaction is DNA(n) + a 2'-deoxyribonucleoside 5'-triphosphate = DNA(n+1) + diphosphate. The enzyme catalyses Exonucleolytic cleavage in the 3'- to 5'-direction to yield nucleoside 5'-phosphates.. Its function is as follows. Possesses two activities: a DNA synthesis (polymerase) and an exonucleolytic activity that degrades single-stranded DNA in the 3'- to 5'-direction. Has a template-primer preference which is characteristic of a replicative DNA polymerase. The polypeptide is DNA polymerase II large subunit (Picrophilus torridus (strain ATCC 700027 / DSM 9790 / JCM 10055 / NBRC 100828 / KAW 2/3)).